The primary structure comprises 486 residues: Ribosomal RNA small subunit methyltransferase F (486 aa).

Residues 124–130 (ASAPGSK), Glu-148, Asp-175, and Asp-193 each bind S-adenosyl-L-methionine. The active-site Nucleophile is Cys-246.

The protein belongs to the class I-like SAM-binding methyltransferase superfamily. RsmB/NOP family.

It is found in the cytoplasm. The catalysed reaction is cytidine(1407) in 16S rRNA + S-adenosyl-L-methionine = 5-methylcytidine(1407) in 16S rRNA + S-adenosyl-L-homocysteine + H(+). In terms of biological role, specifically methylates the cytosine at position 1407 (m5C1407) of 16S rRNA. The chain is Ribosomal RNA small subunit methyltransferase F from Shewanella putrefaciens (strain CN-32 / ATCC BAA-453).